The primary structure comprises 630 residues: Conserved oligomeric Golgi complex subunit 6 (630 aa).

Belongs to the COG6 family. In terms of assembly, component of the conserved oligomeric Golgi complex which is composed of eight different subunits and is required for normal Golgi morphology and localization.

The protein localises to the golgi apparatus membrane. Functionally, required for normal Golgi function. The chain is Conserved oligomeric Golgi complex subunit 6 from Drosophila melanogaster (Fruit fly).